The sequence spans 126 residues: UPF0332 protein glr0978 (126 aa).

This sequence belongs to the UPF0332 family.

In Gloeobacter violaceus (strain ATCC 29082 / PCC 7421), this protein is UPF0332 protein glr0978.